A 98-amino-acid chain; its full sequence is NADH-ubiquinone oxidoreductase chain 4L (98 aa).

Helical transmembrane passes span 1-21, 29-49, and 61-81; these read MTLIHMNILMAFSMSLVGLLM, ALLCLEGMMLSLFVLAALTIL, and IILLVFAACEAAIGLALLVMV.

It belongs to the complex I subunit 4L family. In terms of assembly, core subunit of respiratory chain NADH dehydrogenase (Complex I) which is composed of 45 different subunits.

The protein localises to the mitochondrion inner membrane. It carries out the reaction a ubiquinone + NADH + 5 H(+)(in) = a ubiquinol + NAD(+) + 4 H(+)(out). Functionally, core subunit of the mitochondrial membrane respiratory chain NADH dehydrogenase (Complex I) which catalyzes electron transfer from NADH through the respiratory chain, using ubiquinone as an electron acceptor. Part of the enzyme membrane arm which is embedded in the lipid bilayer and involved in proton translocation. This is NADH-ubiquinone oxidoreductase chain 4L (MT-ND4L) from Eschrichtius robustus (California gray whale).